The sequence spans 864 residues: Leucine--tRNA ligase (864 aa).

Positions 42–52 (PYPSGKLHMGH) match the 'HIGH' region motif. Residues 624–628 (KMSKS) carry the 'KMSKS' region motif. Lys627 contacts ATP.

This sequence belongs to the class-I aminoacyl-tRNA synthetase family.

The protein localises to the cytoplasm. It catalyses the reaction tRNA(Leu) + L-leucine + ATP = L-leucyl-tRNA(Leu) + AMP + diphosphate. This is Leucine--tRNA ligase from Burkholderia ambifaria (strain MC40-6).